The following is a 390-amino-acid chain: Uroporphyrinogen decarboxylase 2, chloroplastic (390 aa).

The N-terminal 30 residues, 1-30 (MATACPPLSLQPAYLSGRSARARRPPPAVR), are a transit peptide targeting the chloroplast. Substrate-binding positions include 70–74 (RQAGR), Phe89, Ser119, Asp120, Tyr197, Ser252, and His367.

The protein belongs to the uroporphyrinogen decarboxylase family. As to quaternary structure, homodimer.

Its subcellular location is the plastid. The protein localises to the chloroplast. The enzyme catalyses uroporphyrinogen III + 4 H(+) = coproporphyrinogen III + 4 CO2. Its pathway is porphyrin-containing compound metabolism; protoporphyrin-IX biosynthesis; coproporphyrinogen-III from 5-aminolevulinate: step 4/4. Catalyzes the decarboxylation of four acetate groups of uroporphyrinogen-III to yield coproporphyrinogen-III. This is Uroporphyrinogen decarboxylase 2, chloroplastic from Oryza sativa subsp. japonica (Rice).